The primary structure comprises 1012 residues: PHD finger protein 20 (1012 aa).

Tudor domains lie at 4 to 69 (HPPN…RPLE) and 83 to 147 (GSSE…GNAR). Positions 142 to 336 (IVGNARPKET…RSSRLSTNGT (195 aa)) are disordered. Positions 147 to 245 (RPKETDHKSL…QVDKKPENDI (99 aa)) are enriched in basic and acidic residues. The residue at position 159 (S159) is a Phosphoserine. Positions 257-269 (KRKRGRPPSIAPT) form a DNA-binding region, a.T hook. Residues 271–280 (VDSNSQTLQP) are compositionally biased toward polar residues. Basic and acidic residues predominate over residues 297–325 (PLKRPRLDKNSSQEKSKNYSENTDKDLSR). Residues 452–477 (FRCKVVDCLKFFRKAKLLHYHMKYFH) form a C2H2-type zinc finger. A compositionally biased stretch (basic and acidic residues) spans 481–490 (KSLEPEESPG). The segment at 481 to 611 (KSLEPEESPG…KGKVKALEED (131 aa)) is disordered. S488 bears the Phosphoserine mark. The span at 497-509 (RGPSASDKPSQET) shows a compositional bias: polar residues. Residues 522-538 (TKDKEKNKEKKFKEFVR) show a composition bias toward basic and acidic residues. Over residues 539–551 (VKPKKKKKKKKKT) the composition is skewed to basic residues. The PHD-type zinc-finger motif lies at 654-700 (RCICEVQEENDFMIQCEECQCWQHGVCMGLLEENVPEKYTCYVCQDP). K843 carries the post-translational modification N6-acetyllysine. Residues 866-912 (DAVNPLHENGDDSLSPRLGWPLDQDRSKGDSDPKPGSPKVKEYVSKK) are disordered. S878 and S880 each carry phosphoserine. The span at 888-912 (DQDRSKGDSDPKPGSPKVKEYVSKK) shows a compositional bias: basic and acidic residues.

As to quaternary structure, homodimer; disulfide-linked. Component of some MLL1/MLL complex, at least composed of the core components KMT2A/MLL1, ASH2L, HCFC1, WDR5 and RBBP5, as well as the facultative components BACC1, CHD8, E2F6, HSP70, INO80C, KANSL1, LAS1L, MAX, MCRS1, MGA, KAT8/MOF, PELP1, PHF20, PRP31, RING2, RUVB1/TIP49A, RUVB2/TIP49B, SENP3, TAF1, TAF4, TAF6, TAF7, TAF9 and TEX10. Component of the NSL complex at least composed of MOF/KAT8, KANSL1, KANSL2, KANSL3, MCRS1, PHF20, OGT1/OGT, WDR5 and HCFC1. In terms of processing, ubiquitinated by TRIM26; leading to proteasomal degradation. Expressed in heart, kidney, liver, lung, pancreas, placenta, spleen and testis. Not expressed in brain, skeletal muscle, colon, ovary, prostate, small intestine and thymus. Expressed in colon and ovary cancer cell lines while it is not expressed in the respective normal tissues.

Its subcellular location is the nucleus. Functionally, methyllysine-binding protein, component of the MOF histone acetyltransferase protein complex. Not required for maintaining the global histone H4 'Lys-16' acetylation (H4K16ac) levels or locus specific histone acetylation, but instead works downstream in transcriptional regulation of MOF target genes. As part of the NSL complex it may be involved in acetylation of nucleosomal histone H4 on several lysine residues. Contributes to methyllysine-dependent p53/TP53 stabilization and up-regulation after DNA damage. In Homo sapiens (Human), this protein is PHD finger protein 20 (PHF20).